The chain runs to 447 residues: N-succinylarginine dihydrolase (447 aa).

Residues Ala-19–Ser-28, Asn-110, and His-137–Arg-138 contribute to the substrate site. Glu-174 is a catalytic residue. Arg-212 is a substrate binding site. The active site involves His-248. Substrate-binding residues include Asp-250 and Asn-359. The active-site Nucleophile is Cys-365.

The protein belongs to the succinylarginine dihydrolase family. In terms of assembly, homodimer.

It catalyses the reaction N(2)-succinyl-L-arginine + 2 H2O + 2 H(+) = N(2)-succinyl-L-ornithine + 2 NH4(+) + CO2. The protein operates within amino-acid degradation; L-arginine degradation via AST pathway; L-glutamate and succinate from L-arginine: step 2/5. Catalyzes the hydrolysis of N(2)-succinylarginine into N(2)-succinylornithine, ammonia and CO(2). In Salmonella paratyphi A (strain ATCC 9150 / SARB42), this protein is N-succinylarginine dihydrolase.